Consider the following 696-residue polypeptide: Glycosyltransferase GlyA (696 aa).

The interval 1–301 (MLVDDKITVI…NQLSRQEESE (301 aa)) is GT2 domain. The segment at 302–556 (KKAIVLAANY…TELGQNHHLH (255 aa)) is GT8 domain. UDP contacts are provided by residues 308-313 (AANYGY) and 399-400 (DC). Residues aspartate 399, aspartate 401, and histidine 518 each coordinate Mn(2+). UDP is bound at residue 518 to 524 (HYLSHRK).

It in the N-terminal section; belongs to the glycosyltransferase 2 family. The protein in the central section; belongs to the glycosyltransferase 8 family.

The protein operates within protein modification; protein glycosylation. In terms of biological role, involved in the polymorphic O-glycosylation of the serine-rich repeat protein PsrP. Catalyzes the fourth step in glycosylation of PsrP in this bacteria. Can transfer the sugar from UDP-galactose to the terminal sugar moiety of PsrP-GlcNAc-Glc-Gal or of PsrP-GlcNAc-Glc-Glc (using truncated substrates with the PsrP SSR1 domain). Has hydrolytic activity against UDP-galactose and to a lesser extent against UDP-glucose. This chain is Glycosyltransferase GlyA, found in Streptococcus pneumoniae serotype 4 (strain ATCC BAA-334 / TIGR4).